The primary structure comprises 190 residues: Protein GrpE (190 aa).

Positions 21-49 (DDLQEEVEATETEETVEEVIEETPEKSEL) are disordered. The span at 23 to 42 (LQEEVEATETEETVEEVIEE) shows a compositional bias: acidic residues.

It belongs to the GrpE family. In terms of assembly, homodimer.

Its subcellular location is the cytoplasm. Participates actively in the response to hyperosmotic and heat shock by preventing the aggregation of stress-denatured proteins, in association with DnaK and GrpE. It is the nucleotide exchange factor for DnaK and may function as a thermosensor. Unfolded proteins bind initially to DnaJ; upon interaction with the DnaJ-bound protein, DnaK hydrolyzes its bound ATP, resulting in the formation of a stable complex. GrpE releases ADP from DnaK; ATP binding to DnaK triggers the release of the substrate protein, thus completing the reaction cycle. Several rounds of ATP-dependent interactions between DnaJ, DnaK and GrpE are required for fully efficient folding. The polypeptide is Protein GrpE (Streptococcus pyogenes serotype M3 (strain SSI-1)).